We begin with the raw amino-acid sequence, 360 residues long: Phospho-N-acetylmuramoyl-pentapeptide-transferase (360 aa).

10 helical membrane passes run 27-47 (IVGLLTALIIALWMGPHLIAW), 71-91 (TPTMGGIMILFSIAVSTLLWA), 97-117 (YVWCVLLVLIGYGIIGFIDDY), 132-152 (WKYFWQSVLALAVAFSMYAIG), 168-188 (VMPQLGMLYILLAYFVIVGTS), 199-219 (GLAIMPTVFVAAGFALVAWAT), 236-256 (AGELVIVCTAIVGAGLGFLWF), 263-283 (VFMGDVGSLALGGALGTIAVL), 288-308 (FLLVIMGGVFVVETLSVILQV), and 338-358 (VIVRFWIISLMLVLIGLATLK).

This sequence belongs to the glycosyltransferase 4 family. MraY subfamily. Requires Mg(2+) as cofactor.

Its subcellular location is the cell inner membrane. The catalysed reaction is UDP-N-acetyl-alpha-D-muramoyl-L-alanyl-gamma-D-glutamyl-meso-2,6-diaminopimeloyl-D-alanyl-D-alanine + di-trans,octa-cis-undecaprenyl phosphate = di-trans,octa-cis-undecaprenyl diphospho-N-acetyl-alpha-D-muramoyl-L-alanyl-D-glutamyl-meso-2,6-diaminopimeloyl-D-alanyl-D-alanine + UMP. It participates in cell wall biogenesis; peptidoglycan biosynthesis. Catalyzes the initial step of the lipid cycle reactions in the biosynthesis of the cell wall peptidoglycan: transfers peptidoglycan precursor phospho-MurNAc-pentapeptide from UDP-MurNAc-pentapeptide onto the lipid carrier undecaprenyl phosphate, yielding undecaprenyl-pyrophosphoryl-MurNAc-pentapeptide, known as lipid I. This chain is Phospho-N-acetylmuramoyl-pentapeptide-transferase, found in Proteus mirabilis (strain HI4320).